A 270-amino-acid polypeptide reads, in one-letter code: 5'-AMP-activated protein kinase subunit beta-1 (270 aa).

Residues 1–44 are disordered; it reads MGNTSSERAALDRQGGHKTPRRDSSGGSKDGDRPKILMDSPEDA. A lipid anchor (N-myristoyl glycine) is attached at glycine 2. Threonine 4 carries the post-translational modification Phosphothreonine. Phosphoserine is present on residues serine 5 and serine 6. Residues 9 to 36 show a composition bias toward basic and acidic residues; the sequence is AALDRQGGHKTPRRDSSGGSKDGDRPKI. Threonine 19 carries the phosphothreonine modification. Residues serine 24 and serine 25 each carry the phosphoserine; by autocatalysis modification. Phosphoserine occurs at positions 40, 96, and 101. The tract at residues 68-163 is glycogen-binding domain; that stretch reads EVNDKAPAQA…QVKKTDFEVF (96 aa). Serine 108 is modified (phosphoserine; by autocatalysis). Residue threonine 148 is modified to Phosphothreonine. Phosphoserine is present on serine 182. An N6-succinyllysine modification is found at lysine 201.

This sequence belongs to the 5'-AMP-activated protein kinase beta subunit family. As to quaternary structure, AMPK is a heterotrimer of an alpha catalytic subunit (PRKAA1 or PRKAA2), a beta (PRKAB1 or PRKAB2) and a gamma non-catalytic subunits (PRKAG1, PRKAG2 or PRKAG3). Interacts with FNIP1 and FNIP2. Phosphorylated when associated with the catalytic subunit (PRKAA1 or PRKAA2). Phosphorylated by ULK1; leading to negatively regulate AMPK activity and suggesting the existence of a regulatory feedback loop between ULK1 and AMPK.

Its function is as follows. Non-catalytic subunit of AMP-activated protein kinase (AMPK), an energy sensor protein kinase that plays a key role in regulating cellular energy metabolism. In response to reduction of intracellular ATP levels, AMPK activates energy-producing pathways and inhibits energy-consuming processes: inhibits protein, carbohydrate and lipid biosynthesis, as well as cell growth and proliferation. AMPK acts via direct phosphorylation of metabolic enzymes, and by longer-term effects via phosphorylation of transcription regulators. Also acts as a regulator of cellular polarity by remodeling the actin cytoskeleton; probably by indirectly activating myosin. Beta non-catalytic subunit acts as a scaffold on which the AMPK complex assembles, via its C-terminus that bridges alpha (PRKAA1 or PRKAA2) and gamma subunits (PRKAG1, PRKAG2 or PRKAG3). This chain is 5'-AMP-activated protein kinase subunit beta-1 (PRKAB1), found in Bos taurus (Bovine).